The primary structure comprises 214 residues: Octanoyltransferase (214 aa).

The BPL/LPL catalytic domain occupies 29–214; it reads STTPDEIWIL…EHLQKQLMPT (186 aa). Substrate-binding positions include 69–76, 146–148, and 159–161; these read RGGEITYH, ALG, and GLA. Cysteine 177 functions as the Acyl-thioester intermediate in the catalytic mechanism.

Belongs to the LipB family.

The protein localises to the cytoplasm. It carries out the reaction octanoyl-[ACP] + L-lysyl-[protein] = N(6)-octanoyl-L-lysyl-[protein] + holo-[ACP] + H(+). It participates in protein modification; protein lipoylation via endogenous pathway; protein N(6)-(lipoyl)lysine from octanoyl-[acyl-carrier-protein]: step 1/2. Catalyzes the transfer of endogenously produced octanoic acid from octanoyl-acyl-carrier-protein onto the lipoyl domains of lipoate-dependent enzymes. Lipoyl-ACP can also act as a substrate although octanoyl-ACP is likely to be the physiological substrate. The polypeptide is Octanoyltransferase (Polynucleobacter asymbioticus (strain DSM 18221 / CIP 109841 / QLW-P1DMWA-1) (Polynucleobacter necessarius subsp. asymbioticus)).